We begin with the raw amino-acid sequence, 302 residues long: Pyridoxal kinase (302 aa).

Positions 10, 45, and 122 each coordinate substrate. Residues 181–182 and 215–227 each bind ATP; these read TS and VGPK…TGTG. D228 contacts substrate.

This sequence belongs to the pyridoxine kinase family. As to quaternary structure, homodimer. A divalent metal cation is required as a cofactor.

The protein localises to the cytoplasm. The catalysed reaction is pyridoxal + ATP = pyridoxal 5'-phosphate + ADP + H(+). It participates in cofactor metabolism; pyridoxal 5'-phosphate salvage; pyridoxal 5'-phosphate from pyridoxal: step 1/1. Functionally, required for synthesis of pyridoxal-5-phosphate from vitamin B6. This Dictyostelium discoideum (Social amoeba) protein is Pyridoxal kinase (pykA).